The chain runs to 77 residues: Beta-defensin 135 (77 aa).

The first 24 residues, 1 to 24 (MATRSVLLALVVLNLLFYVPPGRS), serve as a signal peptide directing secretion. 3 cysteine pairs are disulfide-bonded: cysteine 37/cysteine 64, cysteine 44/cysteine 58, and cysteine 48/cysteine 65.

This sequence belongs to the beta-defensin family.

It localises to the secreted. Its function is as follows. Has antibacterial activity. The polypeptide is Beta-defensin 135 (DEFB135) (Homo sapiens (Human)).